Consider the following 231-residue polypeptide: Protoporphyrinogen IX dehydrogenase [quinone] (231 aa).

A Flavodoxin-like domain is found at 8–178 (CLMLYSTTDG…AVRRFASDFA (171 aa)). FMN-binding positions include 14 to 18 (TTDGH) and 90 to 158 (FFSV…ETDS). Residues 208 to 228 (CLLAIVGMSAAVIVGIRIIAA) form a helical membrane-spanning segment.

Belongs to the HemG family. FMN serves as cofactor.

It is found in the membrane. It catalyses the reaction protoporphyrinogen IX + 3 a menaquinone = protoporphyrin IX + 3 a menaquinol. The enzyme catalyses protoporphyrinogen IX + 3 a ubiquinone = protoporphyrin IX + 3 a ubiquinol. The catalysed reaction is protoporphyrinogen IX + 3 a quinone = protoporphyrin IX + 3 a quinol. Its pathway is porphyrin-containing compound metabolism; protoporphyrin-IX biosynthesis; protoporphyrin-IX from protoporphyrinogen-IX: step 1/1. In terms of biological role, in E.coli extracts under anerobic conditions catalyzes the 6-electron oxidation of protoporphyrinogen IX to form protoporphyrin IX, transferring electrons to fumarate reductase, presumably via menaquinone. In vitro under aerobic conditions forms protoporphyrin IX using ubiquinone as an electron acceptor. Complements an E.coli hemG deletion, allowing normal growth in vivo. This is Protoporphyrinogen IX dehydrogenase [quinone] from Leishmania major.